The sequence spans 327 residues: Ribose-phosphate pyrophosphokinase (327 aa).

Residue 51-53 (DGE) coordinates ATP. Mg(2+) contacts are provided by His-144 and Asp-183. The active site involves Lys-207. Residues Arg-209, Asp-233, and 237 to 241 (DTGGT) contribute to the D-ribose 5-phosphate site.

It belongs to the ribose-phosphate pyrophosphokinase family. Class I subfamily. As to quaternary structure, homohexamer. Mg(2+) is required as a cofactor.

The protein resides in the cytoplasm. The enzyme catalyses D-ribose 5-phosphate + ATP = 5-phospho-alpha-D-ribose 1-diphosphate + AMP + H(+). The protein operates within metabolic intermediate biosynthesis; 5-phospho-alpha-D-ribose 1-diphosphate biosynthesis; 5-phospho-alpha-D-ribose 1-diphosphate from D-ribose 5-phosphate (route I): step 1/1. Its function is as follows. Involved in the biosynthesis of the central metabolite phospho-alpha-D-ribosyl-1-pyrophosphate (PRPP) via the transfer of pyrophosphoryl group from ATP to 1-hydroxyl of ribose-5-phosphate (Rib-5-P). The polypeptide is Ribose-phosphate pyrophosphokinase (Prochlorococcus marinus (strain SARG / CCMP1375 / SS120)).